Here is a 141-residue protein sequence, read N- to C-terminus: Galactose-6-phosphate isomerase subunit LacA (141 aa).

It belongs to the LacAB/RpiB family. Heteromultimeric protein consisting of LacA and LacB.

The catalysed reaction is aldehydo-D-galactose 6-phosphate = keto-D-tagatose 6-phosphate. It functions in the pathway carbohydrate metabolism; D-galactose 6-phosphate degradation; D-tagatose 6-phosphate from D-galactose 6-phosphate: step 1/1. The chain is Galactose-6-phosphate isomerase subunit LacA from Streptococcus equi subsp. equi (strain 4047).